The following is a 319-amino-acid chain: Protein quaking-B (319 aa).

The KH domain occupies 87–153 (YVPVKEYPDF…WEHLNEDLHV (67 aa)). The SH3-binding motif lies at 276–279 (PQTP).

The protein belongs to the quaking family. Homodimer; does not require RNA to homodimerize.

Its subcellular location is the cytoplasm. It is found in the nucleus. In terms of biological role, RNA reader protein, which recognizes and binds specific RNAs, thereby regulating RNA metabolic processes, such as pre-mRNA splicing, circular RNA (circRNA) formation, mRNA export, mRNA stability and/or translation. Involved in various cellular processes, such as mRNA storage into stress granules, apoptosis, interferon response, glial cell fate and development. Binds to the 5'-NACUAAY-N(1,20)-UAAY-3' RNA core sequence. Acts as a mRNA modification reader that specifically recognizes and binds mRNA transcripts modified by internal N(7)-methylguanine (m7G). Promotes the formation of circular RNAs (circRNAs): acts by binding to sites flanking circRNA-forming exons. CircRNAs are produced by back-splicing circularization of pre-mRNAs. Required to protect and promote stability of mRNAs which promotes oligodendrocyte differentiation. Acts as an important regulator of muscle development: required during early skeletal myofibril formation by regulating the accumulation of the muscle-specific tropomyosin-3 (tpm3) transcripts. This Danio rerio (Zebrafish) protein is Protein quaking-B (qki2).